Consider the following 258-residue polypeptide: Thiazole synthase (258 aa).

Lys-100 acts as the Schiff-base intermediate with DXP in catalysis. Residues Gly-161, 187 to 188 (AG), and 209 to 210 (NT) each bind 1-deoxy-D-xylulose 5-phosphate.

Belongs to the ThiG family. As to quaternary structure, homotetramer. Forms heterodimers with either ThiH or ThiS.

It is found in the cytoplasm. The enzyme catalyses [ThiS sulfur-carrier protein]-C-terminal-Gly-aminoethanethioate + 2-iminoacetate + 1-deoxy-D-xylulose 5-phosphate = [ThiS sulfur-carrier protein]-C-terminal Gly-Gly + 2-[(2R,5Z)-2-carboxy-4-methylthiazol-5(2H)-ylidene]ethyl phosphate + 2 H2O + H(+). It functions in the pathway cofactor biosynthesis; thiamine diphosphate biosynthesis. Its function is as follows. Catalyzes the rearrangement of 1-deoxy-D-xylulose 5-phosphate (DXP) to produce the thiazole phosphate moiety of thiamine. Sulfur is provided by the thiocarboxylate moiety of the carrier protein ThiS. In vitro, sulfur can be provided by H(2)S. This chain is Thiazole synthase, found in Campylobacter jejuni (strain RM1221).